Here is a 688-residue protein sequence, read N- to C-terminus: Glycine--tRNA ligase beta subunit (688 aa).

Belongs to the class-II aminoacyl-tRNA synthetase family. Tetramer of two alpha and two beta subunits.

It is found in the cytoplasm. The catalysed reaction is tRNA(Gly) + glycine + ATP = glycyl-tRNA(Gly) + AMP + diphosphate. This is Glycine--tRNA ligase beta subunit from Histophilus somni (strain 2336) (Haemophilus somnus).